Consider the following 426-residue polypeptide: Histidine--tRNA ligase (426 aa).

This sequence belongs to the class-II aminoacyl-tRNA synthetase family.

It localises to the cytoplasm. The enzyme catalyses tRNA(His) + L-histidine + ATP = L-histidyl-tRNA(His) + AMP + diphosphate + H(+). The sequence is that of Histidine--tRNA ligase (hisS) from Thermoplasma volcanium (strain ATCC 51530 / DSM 4299 / JCM 9571 / NBRC 15438 / GSS1).